A 252-amino-acid polypeptide reads, in one-letter code: Probable transcriptional regulatory protein A1C_04175 (252 aa).

The protein belongs to the TACO1 family.

The protein resides in the cytoplasm. This Rickettsia akari (strain Hartford) protein is Probable transcriptional regulatory protein A1C_04175.